A 379-amino-acid polypeptide reads, in one-letter code: Gonadotropin-releasing hormone II receptor (379 aa).

The Extracellular segment spans residues 1–40 (MSAGNGTPWGSAAGEESWAASGVAVEGSELPTFSAAAKVR). Residues 41–60 (VGVTIVLFVSSAGGNLAVLW) form a helical membrane-spanning segment. Residues 61–76 (SVTRPQPSQLRPSPVR) lie on the Cytoplasmic side of the membrane. A helical transmembrane segment spans residues 77–96 (TLFAHLAAADLLVTFVVMPL). Topologically, residues 97–114 (DATWNITVQWLAEDIACR) are extracellular. A glycan (N-linked (GlcNAc...) asparagine) is linked at Asn-101. Cys-113 and Cys-188 are oxidised to a cystine. A helical membrane pass occupies residues 115 to 136 (TLMFLKLMAMYSAAFLPVVIGL). Topologically, residues 137–160 (DRQAAVLNPLGSRSGVRKLLGAAW) are cytoplasmic. The chain crosses the membrane as a helical span at residues 161–178 (GLSFLLALPQLFLFHTVH). Residues 179–204 (RAGPVPFTQCVTKGSFKARWQETTYN) lie on the Extracellular side of the membrane. Residues 205–224 (LFTFRCLFLLPLTAMAICYS) form a helical membrane-spanning segment. Topologically, residues 225-278 (HIVLSVSSPQTRKGSHAPAGEFALCRSFDNCPRVRLWALRLALLILLTFILCWT) are cytoplasmic. The chain crosses the membrane as a helical span at residues 279-297 (PYYLLGLWYWFSPTMLTEV). Residues 298–303 (PPSLSH) are Extracellular-facing. A helical membrane pass occupies residues 304–323 (ILFLFGLLNAPLDPLLYGAF). Residues 324–379 (TLGCQRGHQELSIDSSNEGSGRMLQQEIHALRQQEVQKTVTSRSAGETKDISITSI) are Cytoplasmic-facing.

Belongs to the G-protein coupled receptor 1 family. Phosphorylated on the C-terminal cytoplasmic tail.

It is found in the cell membrane. Its function is as follows. Receptor for gonadotropin releasing hormone II (GnRH II). This receptor mediates its action by association with G proteins that activate a phosphatidylinositol-calcium second messenger system. The sequence is that of Gonadotropin-releasing hormone II receptor (GNRHR2) from Macaca mulatta (Rhesus macaque).